The following is a 1185-amino-acid chain: Zinc finger SWIM domain-containing protein 5 (1185 aa).

Basic and acidic residues predominate over residues 1–10 (MADGGEREEL). Disordered regions lie at residues 1–45 (MADG…GGAG) and 123–153 (AGAA…GSAP). The SWIM-type zinc finger occupies 219–256 (YKVAISFDRCKITSVTCGCGNKDIFYCAHVVALSLYRI).

The protein is Zinc finger SWIM domain-containing protein 5 (ZSWIM5) of Homo sapiens (Human).